The primary structure comprises 173 residues: Photosystem I assembly protein Ycf3 (173 aa).

3 TPR repeats span residues 35-68 (AYVYYRDGLSAQNDGDYAEALENYEESLKLEENP), 72-105 (GETLKNMAIIYMSNGEEDRALATYQKALDENPKQ), and 120-153 (GRTAEEEGRRDDADGWFDQAAEVWTQAVRLNPGG).

It belongs to the Ycf3 family.

It localises to the cellular thylakoid membrane. In terms of biological role, essential for the assembly of the photosystem I (PSI) complex. May act as a chaperone-like factor to guide the assembly of the PSI subunits. The protein is Photosystem I assembly protein Ycf3 of Synechococcus sp. (strain WH7803).